The following is a 146-amino-acid chain: VHLTDAEKNLVSGLWGKVNADAVGAEALGRLLVVTPWTQRFFEHFGDLSSASAVMNNPQVKAHGKKVIHSFADGLKHLDNLKGAFSSLSELHCDKLHVDPENFKLLGNMIIIVLSHDLGKDFTPSAQSAFHKVVAGVANALAHKYH.

The residue at position 1 (V1) is an N-acetylvaline. The Globin domain maps to 2-146 (HLTDAEKNLV…VANALAHKYH (145 aa)). H63 is a binding site for heme b. K82 is modified (N6-acetyllysine). Position 92 (H92) interacts with heme b. C93 carries the S-nitrosocysteine modification. K144 carries the post-translational modification N6-acetyllysine.

Belongs to the globin family. In terms of assembly, heterotetramer of two alpha chains and two beta chains. Red blood cells.

Involved in oxygen transport from the lung to the various peripheral tissues. The chain is Hemoglobin subunit beta (HBB) from Mesocricetus brandti (Brandt's hamster).